The chain runs to 744 residues: Catalase-peroxidase (744 aa).

The tryptophyl-tyrosyl-methioninium (Trp-Tyr) (with M-257) cross-link spans 108-231 (WHSAGTYRIS…LAAVQMGLIY (124 aa)). H109 (proton acceptor) is an active-site residue. Positions 231 to 257 (YVNPEGPNGNPDPIAAARDIRETFRRM) form a cross-link, tryptophyl-tyrosyl-methioninium (Tyr-Met) (with W-108). H272 is a binding site for heme b. A disordered region spans residues 353-372 (ANQWKPKDGAGAGTVPDAHD).

Belongs to the peroxidase family. Peroxidase/catalase subfamily. In terms of assembly, homodimer or homotetramer. Heme b serves as cofactor. Formation of the three residue Trp-Tyr-Met cross-link is important for the catalase, but not the peroxidase activity of the enzyme.

The catalysed reaction is H2O2 + AH2 = A + 2 H2O. It carries out the reaction 2 H2O2 = O2 + 2 H2O. Bifunctional enzyme with both catalase and broad-spectrum peroxidase activity. The sequence is that of Catalase-peroxidase from Frankia casuarinae (strain DSM 45818 / CECT 9043 / HFP020203 / CcI3).